Here is a 152-residue protein sequence, read N- to C-terminus: MPVLVSNLQGKVAVDEALTGLLTRAAQEVLKAEGYGEEAEVSLVFVDDAYIHGLNRQYRGVDAPTDVLSFAMQEGEPLAGGEEELILGDVVISLQAAERQAGEYGHSLQREAAYLAVHGVLHLLGYDHQGEEERKIMRRKEEEVLGRLNLTR.

Zn(2+) contacts are provided by His118, His122, and His128.

Belongs to the endoribonuclease YbeY family. Zn(2+) serves as cofactor.

Its subcellular location is the cytoplasm. Single strand-specific metallo-endoribonuclease involved in late-stage 70S ribosome quality control and in maturation of the 3' terminus of the 16S rRNA. The protein is Endoribonuclease YbeY of Pelotomaculum thermopropionicum (strain DSM 13744 / JCM 10971 / SI).